The chain runs to 315 residues: MGPFGARASPEAGQVVKQPLTDDPQESLAQGESERLPPRFATYFHIHLVSDSTGETLNAMARAVCARFTDILPIEHIYALVRSTRQLDRALEEIAGAPGVVMHTIVDPGLRAALEEGCRKLEMPCIAALDPVISAMSRYLGARISTRVGAQHALTNDYFDRIEALDYAIAHDDGQGGQDLTQADVILVGVSRTSKTPTCIYLAHRGVRAANVPLVPGRPPPPELFELKNTLIVGLITSPDRLIQIRRNRLLSLKENRESDYVDADAVRQEIIAARRLFERQNWPVIDITRRSVEETAAAVINLLSGGRGKVEVLG.

A disordered region spans residues 1 to 32 (MGPFGARASPEAGQVVKQPLTDDPQESLAQGE). Residue 189-196 (GVSRTSKT) coordinates ADP.

It belongs to the pyruvate, phosphate/water dikinase regulatory protein family. PDRP subfamily.

The enzyme catalyses N(tele)-phospho-L-histidyl/L-threonyl-[pyruvate, phosphate dikinase] + ADP = N(tele)-phospho-L-histidyl/O-phospho-L-threonyl-[pyruvate, phosphate dikinase] + AMP + H(+). It catalyses the reaction N(tele)-phospho-L-histidyl/O-phospho-L-threonyl-[pyruvate, phosphate dikinase] + phosphate + H(+) = N(tele)-phospho-L-histidyl/L-threonyl-[pyruvate, phosphate dikinase] + diphosphate. In terms of biological role, bifunctional serine/threonine kinase and phosphorylase involved in the regulation of the pyruvate, phosphate dikinase (PPDK) by catalyzing its phosphorylation/dephosphorylation. The chain is Putative pyruvate, phosphate dikinase regulatory protein from Caulobacter vibrioides (strain ATCC 19089 / CIP 103742 / CB 15) (Caulobacter crescentus).